Here is a 382-residue protein sequence, read N- to C-terminus: Type II secretion system protein L (382 aa).

The Cytoplasmic segment spans residues 1–233 (MSGVSALFLP…QQSSQWRRWR (233 aa)). Residues 234 to 254 (PLLGLVGLWLVLQWGFTLVQA) traverse the membrane as a helical segment. The Periplasmic portion of the chain corresponds to 255 to 382 (WQLQREGDRY…TVSARLVIGG (128 aa)).

It belongs to the GSP L family. In terms of assembly, type II secretion system is composed of four main components: the outer membrane complex, the inner membrane complex, the cytoplasmic secretion ATPase and the periplasm-spanning pseudopilus. Forms homodimers. Interacts with XcpZ/GspM. Interacts with XcpR/GspE and XcpS/GspF.

The protein localises to the cell inner membrane. Functionally, inner membrane component of the type II secretion system required for the energy-dependent secretion of extracellular factors such as proteases and toxins from the periplasm. Plays a role in the complex assembly and recruits XcpZ resulting in a stable complex in the inner membrane. Provides thus a link between the energy-providing XcpR protein in the cytoplasm and the rest of the T2SS machinery. This is Type II secretion system protein L (xcpY) from Pseudomonas aeruginosa (strain ATCC 15692 / DSM 22644 / CIP 104116 / JCM 14847 / LMG 12228 / 1C / PRS 101 / PAO1).